A 304-amino-acid chain; its full sequence is Ornithine carbamoyltransferase (304 aa).

Carbamoyl phosphate-binding positions include serine 53–threonine 56, glutamine 80, arginine 104, and histidine 131–glutamine 134. Residues asparagine 162, aspartate 219, and serine 223–methionine 224 contribute to the L-ornithine site. Carbamoyl phosphate-binding positions include cysteine 259 to leucine 260 and arginine 287.

Belongs to the aspartate/ornithine carbamoyltransferase superfamily. OTCase family.

The protein localises to the cytoplasm. It catalyses the reaction carbamoyl phosphate + L-ornithine = L-citrulline + phosphate + H(+). The protein operates within amino-acid biosynthesis; L-arginine biosynthesis; L-arginine from L-ornithine and carbamoyl phosphate: step 1/3. Functionally, reversibly catalyzes the transfer of the carbamoyl group from carbamoyl phosphate (CP) to the N(epsilon) atom of ornithine (ORN) to produce L-citrulline. The sequence is that of Ornithine carbamoyltransferase from Nitrosococcus oceani (strain ATCC 19707 / BCRC 17464 / JCM 30415 / NCIMB 11848 / C-107).